Here is an 819-residue protein sequence, read N- to C-terminus: Kinesin-like protein KIN-13A (819 aa).

Residues 150–178 are disordered; the sequence is EPFEPSPFIPKEMDEDDDDMLPGSQPGPS. Residues 199–535 form the Kinesin motor domain; sequence KIKVVVRKRP…LRYADRVKSL (337 aa). 289–296 is an ATP binding site; sequence GQTGSGKT. A disordered region spans residues 534-729; that stretch reads SLSKGSNTRK…QSEKESSCDD (196 aa). The segment covering 550–562 has biased composition (low complexity); sequence TIPSSKDSSSAPS. Basic and acidic residues-rich tracts occupy residues 577–589 and 614–631; these read QEKR…RKAA and RGKE…ERVD. Positions 632 to 652 are enriched in polar residues; sequence LNSSRISYNSKPQSVQSSANL. Residues 669–686 show a composition bias toward basic and acidic residues; it reads YRDDKPERQSNYAKKDSG. Residues 697–719 are compositionally biased toward low complexity; it reads QQAKQLQQQQRPTSASASQNSSR. Residues 736-767 are a coiled coil; sequence LEEEEALIAAHRKEIENTMEIVREEMNLLAEV.

Belongs to the TRAFAC class myosin-kinesin ATPase superfamily. Kinesin family. KIN-13 subfamily. As to expression, ubiquitous.

Its subcellular location is the microsome. This chain is Kinesin-like protein KIN-13A, found in Oryza sativa subsp. japonica (Rice).